We begin with the raw amino-acid sequence, 215 residues long: Cytochrome b6 (215 aa).

The helical transmembrane segment at 32 to 52 (IFHCLGGITLTCFLVQVATGF) threads the bilayer. Cysteine 35 serves as a coordination point for heme c. Histidine 86 and histidine 100 together coordinate heme b. 3 helical membrane passes run 90 to 110 (ASMM…TGGF), 116 to 136 (LTWV…VTGY), and 186 to 206 (LHTF…FPMI). Residues histidine 187 and histidine 202 each coordinate heme b.

This sequence belongs to the cytochrome b family. PetB subfamily. The 4 large subunits of the cytochrome b6-f complex are cytochrome b6, subunit IV (17 kDa polypeptide, PetD), cytochrome f and the Rieske protein, while the 4 small subunits are PetG, PetL, PetM and PetN. The complex functions as a dimer. Requires heme b as cofactor. It depends on heme c as a cofactor.

The protein localises to the plastid. Its subcellular location is the chloroplast thylakoid membrane. Functionally, component of the cytochrome b6-f complex, which mediates electron transfer between photosystem II (PSII) and photosystem I (PSI), cyclic electron flow around PSI, and state transitions. In Calycanthus floridus var. glaucus (Eastern sweetshrub), this protein is Cytochrome b6.